Consider the following 151-residue polypeptide: Deoxyuridine 5'-triphosphate nucleotidohydrolase (151 aa).

Residues 70 to 72 (RSG), Asn83, 87 to 89 (LID), and Met97 each bind substrate.

Belongs to the dUTPase family. It depends on Mg(2+) as a cofactor.

The enzyme catalyses dUTP + H2O = dUMP + diphosphate + H(+). It participates in pyrimidine metabolism; dUMP biosynthesis; dUMP from dCTP (dUTP route): step 2/2. Functionally, this enzyme is involved in nucleotide metabolism: it produces dUMP, the immediate precursor of thymidine nucleotides and it decreases the intracellular concentration of dUTP so that uracil cannot be incorporated into DNA. This chain is Deoxyuridine 5'-triphosphate nucleotidohydrolase, found in Histophilus somni (strain 129Pt) (Haemophilus somnus).